The primary structure comprises 379 residues: 4-hydroxy-3-methylbut-2-enyl diphosphate reductase (379 aa).

Position 39 (C39) interacts with [4Fe-4S] cluster. H69 provides a ligand contact to (2E)-4-hydroxy-3-methylbut-2-enyl diphosphate. H69 contributes to the dimethylallyl diphosphate binding site. H69 contributes to the isopentenyl diphosphate binding site. Position 130 (C130) interacts with [4Fe-4S] cluster. H158 is a (2E)-4-hydroxy-3-methylbut-2-enyl diphosphate binding site. H158 is a dimethylallyl diphosphate binding site. H158 contributes to the isopentenyl diphosphate binding site. The Proton donor role is filled by E160. T223 lines the (2E)-4-hydroxy-3-methylbut-2-enyl diphosphate pocket. C261 provides a ligand contact to [4Fe-4S] cluster. S290, S291, N292, and S352 together coordinate (2E)-4-hydroxy-3-methylbut-2-enyl diphosphate. The dimethylallyl diphosphate site is built by S290, S291, N292, and S352. Isopentenyl diphosphate contacts are provided by S290, S291, N292, and S352.

It belongs to the IspH family. Requires [4Fe-4S] cluster as cofactor.

It catalyses the reaction isopentenyl diphosphate + 2 oxidized [2Fe-2S]-[ferredoxin] + H2O = (2E)-4-hydroxy-3-methylbut-2-enyl diphosphate + 2 reduced [2Fe-2S]-[ferredoxin] + 2 H(+). The catalysed reaction is dimethylallyl diphosphate + 2 oxidized [2Fe-2S]-[ferredoxin] + H2O = (2E)-4-hydroxy-3-methylbut-2-enyl diphosphate + 2 reduced [2Fe-2S]-[ferredoxin] + 2 H(+). Its pathway is isoprenoid biosynthesis; dimethylallyl diphosphate biosynthesis; dimethylallyl diphosphate from (2E)-4-hydroxy-3-methylbutenyl diphosphate: step 1/1. The protein operates within isoprenoid biosynthesis; isopentenyl diphosphate biosynthesis via DXP pathway; isopentenyl diphosphate from 1-deoxy-D-xylulose 5-phosphate: step 6/6. Its function is as follows. Catalyzes the conversion of 1-hydroxy-2-methyl-2-(E)-butenyl 4-diphosphate (HMBPP) into a mixture of isopentenyl diphosphate (IPP) and dimethylallyl diphosphate (DMAPP). Acts in the terminal step of the DOXP/MEP pathway for isoprenoid precursor biosynthesis. This is 4-hydroxy-3-methylbut-2-enyl diphosphate reductase from Synechocystis sp. (strain ATCC 27184 / PCC 6803 / Kazusa).